We begin with the raw amino-acid sequence, 211 residues long: NADH-quinone oxidoreductase subunit I (211 aa).

The disordered stretch occupies residues M1–R27. 2 4Fe-4S ferredoxin-type domains span residues L71–A101 and R117–D146. Residues C81, C84, C87, C91, C126, C129, C132, and C136 each coordinate [4Fe-4S] cluster.

It belongs to the complex I 23 kDa subunit family. NDH-1 is composed of 14 different subunits. Subunits NuoA, H, J, K, L, M, N constitute the membrane sector of the complex. Requires [4Fe-4S] cluster as cofactor.

The protein resides in the cell membrane. It catalyses the reaction a quinone + NADH + 5 H(+)(in) = a quinol + NAD(+) + 4 H(+)(out). Functionally, NDH-1 shuttles electrons from NADH, via FMN and iron-sulfur (Fe-S) centers, to quinones in the respiratory chain. The immediate electron acceptor for the enzyme in this species is believed to be menaquinone. Couples the redox reaction to proton translocation (for every two electrons transferred, four hydrogen ions are translocated across the cytoplasmic membrane), and thus conserves the redox energy in a proton gradient. The polypeptide is NADH-quinone oxidoreductase subunit I (Mycobacterium bovis (strain ATCC BAA-935 / AF2122/97)).